A 181-amino-acid chain; its full sequence is Ribulose bisphosphate carboxylase small subunit 3B, chloroplastic (181 aa).

A chloroplast-targeting transit peptide spans 1 to 54 (MASSMLSSAAVVTSPAQATMVAPFTGLKSSAAFPVTRKTNKDITSIASNGGRVS).

The protein belongs to the RuBisCO small chain family. Heterohexadecamer of 8 large and 8 small subunits.

The protein localises to the plastid. Its subcellular location is the chloroplast. Functionally, ruBisCO catalyzes two reactions: the carboxylation of D-ribulose 1,5-bisphosphate, the primary event in carbon dioxide fixation, as well as the oxidative fragmentation of the pentose substrate. Both reactions occur simultaneously and in competition at the same active site. Although the small subunit is not catalytic it is essential for maximal activity. The chain is Ribulose bisphosphate carboxylase small subunit 3B, chloroplastic (RBCS-3B) from Arabidopsis thaliana (Mouse-ear cress).